Here is a 231-residue protein sequence, read N- to C-terminus: 7-cyano-7-deazaguanine synthase (231 aa).

8–18 contributes to the ATP binding site; it reads FSGGQDSTTCL. Cys-188, Cys-197, Cys-200, and Cys-203 together coordinate Zn(2+).

This sequence belongs to the QueC family. The cofactor is Zn(2+).

It carries out the reaction 7-carboxy-7-deazaguanine + NH4(+) + ATP = 7-cyano-7-deazaguanine + ADP + phosphate + H2O + H(+). It participates in purine metabolism; 7-cyano-7-deazaguanine biosynthesis. Its function is as follows. Catalyzes the ATP-dependent conversion of 7-carboxy-7-deazaguanine (CDG) to 7-cyano-7-deazaguanine (preQ(0)). The protein is 7-cyano-7-deazaguanine synthase of Salmonella schwarzengrund (strain CVM19633).